The chain runs to 252 residues: 5'-methylthioadenosine/S-adenosylhomocysteine nucleosidase (252 aa).

Glu-20 serves as the catalytic Proton acceptor. Substrate contacts are provided by residues Gly-86, Ile-160, and 181–182; that span reads ME. Asp-205 serves as the catalytic Proton donor.

It belongs to the PNP/UDP phosphorylase family. MtnN subfamily. Homodimer.

The catalysed reaction is S-adenosyl-L-homocysteine + H2O = S-(5-deoxy-D-ribos-5-yl)-L-homocysteine + adenine. It catalyses the reaction S-methyl-5'-thioadenosine + H2O = 5-(methylsulfanyl)-D-ribose + adenine. The enzyme catalyses 5'-deoxyadenosine + H2O = 5-deoxy-D-ribose + adenine. The protein operates within amino-acid biosynthesis; L-methionine biosynthesis via salvage pathway; S-methyl-5-thio-alpha-D-ribose 1-phosphate from S-methyl-5'-thioadenosine (hydrolase route): step 1/2. Functionally, catalyzes the irreversible cleavage of the glycosidic bond in both 5'-methylthioadenosine (MTA) and S-adenosylhomocysteine (SAH/AdoHcy) to adenine and the corresponding thioribose, 5'-methylthioribose and S-ribosylhomocysteine, respectively. Also cleaves 5'-deoxyadenosine, a toxic by-product of radical S-adenosylmethionine (SAM) enzymes, into 5-deoxyribose and adenine. Thus, is required for in vivo function of the radical SAM enzymes biotin synthase and lipoic acid synthase, that are inhibited by 5'-deoxyadenosine accumulation. This is 5'-methylthioadenosine/S-adenosylhomocysteine nucleosidase from Buchnera aphidicola subsp. Baizongia pistaciae (strain Bp).